The primary structure comprises 51 residues: Large ribosomal subunit protein bL33 (51 aa).

The protein belongs to the bacterial ribosomal protein bL33 family.

In Psychrobacter sp. (strain PRwf-1), this protein is Large ribosomal subunit protein bL33.